Reading from the N-terminus, the 267-residue chain is Nus factor SuhB (267 aa).

Residues glutamate 67, aspartate 84, and leucine 86 each contribute to the Mg(2+) site. Glutamate 67 serves as a coordination point for substrate. Residues 86 to 89 (LDGT), arginine 183, and aspartate 212 contribute to the substrate site.

The protein belongs to the inositol monophosphatase superfamily. In terms of assembly, homodimer. The rRNA transcription and antitermination complex (rrnTAC) consists of RNA polymerase (RNAP), NusA, NusB, NusE (rpsJ), NusG, SubB, ribosomal protein S4, DNA and precursor rRNA; S4 is more flexible than other subunits. Requires Mg(2+) as cofactor.

Its subcellular location is the cytoplasm. It carries out the reaction a myo-inositol phosphate + H2O = myo-inositol + phosphate. In terms of biological role, part of the processive rRNA transcription and antitermination complex (rrnTAC). The complex forms an RNA-chaperone ring around the RNA exit tunnel of RNA polymerase (RNAP). It supports rapid transcription and antitermination of rRNA operons, cotranscriptional rRNA folding, and annealing of distal rRNA regions to allow correct ribosome biogenesis. This subunit may play a central role in organizing the structure. This chain is Nus factor SuhB, found in Vibrio cholerae serotype O1 (strain ATCC 39315 / El Tor Inaba N16961).